We begin with the raw amino-acid sequence, 141 residues long: Hemoglobin subunit alpha (141 aa).

In terms of domain architecture, Globin spans 1–141 (VLSSADKNNI…VSTVLTSKYR (141 aa)). Position 3 is a phosphoserine (serine 3). Residues lysine 7 and lysine 11 each carry the N6-succinyllysine modification. An N6-acetyllysine; alternate modification is found at lysine 16. Lysine 16 is modified (N6-succinyllysine; alternate). Tyrosine 24 bears the Phosphotyrosine mark. Serine 35 carries the phosphoserine modification. Lysine 40 carries the post-translational modification N6-succinyllysine. The residue at position 49 (serine 49) is a Phosphoserine. O2 is bound at residue histidine 58. Histidine 87 contributes to the heme b binding site. Serine 102 bears the Phosphoserine mark. Phosphothreonine occurs at positions 108, 134, and 137. Serine 138 bears the Phosphoserine mark.

It belongs to the globin family. In terms of assembly, heterotetramer of two alpha chains and two beta chains. As to expression, red blood cells.

Functionally, involved in oxygen transport from the lung to the various peripheral tissues. In terms of biological role, hemopressin acts as an antagonist peptide of the cannabinoid receptor CNR1. Hemopressin-binding efficiently blocks cannabinoid receptor CNR1 and subsequent signaling. The polypeptide is Hemoglobin subunit alpha (HBA) (Paguma larvata (Masked palm civet)).